Reading from the N-terminus, the 194-residue chain is MLPTVIEQSGQGDRAFDIYSRLLRERIIFLGTDVNDQVADALVAQMLFLEADDPEKDIQLYVNSPGGSVTAGLAIYDTMQQVSPDVITICYGLAASMGAFLLSGGTKGKRLALPNSRIMIHQPLGGAQGQAVEIEIQAKEILYLKETLNSLLAEHTGQNIQKISEDTDRDHFLSPQEAVEYGLIDKVVSNLNSI.

Ser96 serves as the catalytic Nucleophile. The active site involves His121.

Belongs to the peptidase S14 family. Fourteen ClpP subunits assemble into 2 heptameric rings which stack back to back to give a disk-like structure with a central cavity, resembling the structure of eukaryotic proteasomes.

The protein resides in the cytoplasm. The enzyme catalyses Hydrolysis of proteins to small peptides in the presence of ATP and magnesium. alpha-casein is the usual test substrate. In the absence of ATP, only oligopeptides shorter than five residues are hydrolyzed (such as succinyl-Leu-Tyr-|-NHMec, and Leu-Tyr-Leu-|-Tyr-Trp, in which cleavage of the -Tyr-|-Leu- and -Tyr-|-Trp bonds also occurs).. Its function is as follows. Cleaves peptides in various proteins in a process that requires ATP hydrolysis. Has a chymotrypsin-like activity. Plays a major role in the degradation of misfolded proteins. The protein is ATP-dependent Clp protease proteolytic subunit 3 of Prochlorococcus marinus (strain NATL2A).